The following is a 369-amino-acid chain: Flagellar P-ring protein (369 aa).

Residues Met-1–Ala-23 form the signal peptide.

This sequence belongs to the FlgI family. As to quaternary structure, the basal body constitutes a major portion of the flagellar organelle and consists of four rings (L,P,S, and M) mounted on a central rod.

The protein resides in the periplasm. It is found in the bacterial flagellum basal body. In terms of biological role, assembles around the rod to form the L-ring and probably protects the motor/basal body from shearing forces during rotation. The sequence is that of Flagellar P-ring protein from Chromohalobacter salexigens (strain ATCC BAA-138 / DSM 3043 / CIP 106854 / NCIMB 13768 / 1H11).